The chain runs to 587 residues: Deoxynucleoside triphosphate triphosphohydrolase sahd-1 (587 aa).

The region spanning 92–262 (RFVHSLGTFS…GHDVDKMDYL (171 aa)) is the HD domain. Zn(2+) contacts are provided by H95, H134, D135, and D257. The tract at residues 554-587 (EKFLTPRKRSPQDSPDEVSSSCSTAKRRLEFGSS) is disordered. T558 carries the phosphothreonine modification.

The protein belongs to the SAMHD1 family. As to quaternary structure, homodimer. Homotetramer; in dGTP-bound form. It depends on Zn(2+) as a cofactor.

It is found in the nucleus. It localises to the chromosome. It catalyses the reaction a 2'-deoxyribonucleoside 5'-triphosphate + H2O = a 2'-deoxyribonucleoside + triphosphate + H(+). Its activity is regulated as follows. Allosterically activated and regulated by GTP or dGTP. Allosteric activation promotes the formation of highly active homotetramers. Phosphorylation impairs homotetramerization, thereby inhibiting dNTPase activity. Has deoxynucleoside triphosphate (dNTPase) activity. dNTPase activity acts as a regulator of DNA precursor pools by regulating dNTP pools. Phosphorylation acts as a switch to control dNTPase-dependent and -independent functions. The sequence is that of Deoxynucleoside triphosphate triphosphohydrolase sahd-1 from Caenorhabditis elegans.